Here is a 156-residue protein sequence, read N- to C-terminus: Protein LlR18A (156 aa).

2 residues coordinate trans-zeatin: N8 and D28. Residues P32 and I38 each coordinate Ca(2+). 3 residues coordinate trans-zeatin: K54, D133, and K136.

The protein belongs to the BetVI family. Expressed constitutively in roots.

Its subcellular location is the cytoplasm. It localises to the cytosol. Functionally, class II ribonuclease (RNase). Binds to cytokinins. Interacts with melatonin. This chain is Protein LlR18A (LLR18A), found in Lupinus luteus (European yellow lupine).